The following is a 247-amino-acid chain: 1-(5-phosphoribosyl)-5-[(5-phosphoribosylamino)methylideneamino] imidazole-4-carboxamide isomerase (247 aa).

The active-site Proton acceptor is the aspartate 8. Aspartate 130 (proton donor) is an active-site residue.

Belongs to the HisA/HisF family.

It localises to the cytoplasm. The enzyme catalyses 1-(5-phospho-beta-D-ribosyl)-5-[(5-phospho-beta-D-ribosylamino)methylideneamino]imidazole-4-carboxamide = 5-[(5-phospho-1-deoxy-D-ribulos-1-ylimino)methylamino]-1-(5-phospho-beta-D-ribosyl)imidazole-4-carboxamide. It functions in the pathway amino-acid biosynthesis; L-histidine biosynthesis; L-histidine from 5-phospho-alpha-D-ribose 1-diphosphate: step 4/9. The polypeptide is 1-(5-phosphoribosyl)-5-[(5-phosphoribosylamino)methylideneamino] imidazole-4-carboxamide isomerase (Stutzerimonas stutzeri (strain A1501) (Pseudomonas stutzeri)).